Consider the following 597-residue polypeptide: DNA ligase (597 aa).

Residue E262 participates in ATP binding. The N6-AMP-lysine intermediate role is filled by K264. Residues R269, R284, E314, F354, R431, and K437 each coordinate ATP.

This sequence belongs to the ATP-dependent DNA ligase family. The cofactor is Mg(2+). Requires Mn(2+) as cofactor.

The catalysed reaction is ATP + (deoxyribonucleotide)n-3'-hydroxyl + 5'-phospho-(deoxyribonucleotide)m = (deoxyribonucleotide)n+m + AMP + diphosphate.. It catalyses the reaction ADP + (deoxyribonucleotide)n-3'-hydroxyl + 5'-phospho-(deoxyribonucleotide)m = (deoxyribonucleotide)n+m + AMP + phosphate.. The enzyme catalyses GTP + (deoxyribonucleotide)n-3'-hydroxyl + 5'-phospho-(deoxyribonucleotide)m = (deoxyribonucleotide)n+m + GMP + diphosphate.. With respect to regulation, inhibited by Ca(2+) and Zn(2+). DNA ligase that seals nicks in double-stranded DNA during DNA replication, DNA recombination and DNA repair. Can use both ATP and ADP. This Staphylothermus marinus (strain ATCC 43588 / DSM 3639 / JCM 9404 / F1) protein is DNA ligase.